We begin with the raw amino-acid sequence, 126 residues long: Small ribosomal subunit protein uS13 (126 aa).

Positions 96-126 (LPVRGQQTKTNARTRKGRRKGTVANKKKVSK) are disordered. Basic residues predominate over residues 107–126 (ARTRKGRRKGTVANKKKVSK).

The protein belongs to the universal ribosomal protein uS13 family. In terms of assembly, part of the 30S ribosomal subunit. Forms a loose heterodimer with protein S19. Forms two bridges to the 50S subunit in the 70S ribosome.

Located at the top of the head of the 30S subunit, it contacts several helices of the 16S rRNA. In the 70S ribosome it contacts the 23S rRNA (bridge B1a) and protein L5 of the 50S subunit (bridge B1b), connecting the 2 subunits; these bridges are implicated in subunit movement. Contacts the tRNAs in the A and P-sites. This Hydrogenobaculum sp. (strain Y04AAS1) protein is Small ribosomal subunit protein uS13.